Consider the following 453-residue polypeptide: Wall-associated protein (453 aa).

The first 29 residues, 1–29, serve as a signal peptide directing secretion; sequence MKMKRKLLSLVSVLTILLGAFWVTKIVKA. A disordered region spans residues 331–403; the sequence is GRASSRVKRQ…TASQTNVPTT (73 aa). Over residues 342–403 the composition is skewed to low complexity; it reads ETTTVTETTT…TASQTNVPTT (62 aa). An LPXTG sorting signal motif is present at residues 422 to 426; that stretch reads LPSTG. Residue T425 is modified to Pentaglycyl murein peptidoglycan amidated threonine. A propeptide spans 426 to 453 (removed by sortase); it reads GEQAGLLLTTVGLVIVAVAGVYFYRTRR.

It localises to the secreted. The protein localises to the cell wall. This is Wall-associated protein (wapA) from Streptococcus mutans serotype c (strain ATCC 700610 / UA159).